A 94-amino-acid polypeptide reads, in one-letter code: Large ribosomal subunit protein bL27 (94 aa).

A propeptide spanning residues 1–9 is cleaved from the precursor; it reads MLELNLQLF. Residues 12–33 form a disordered region; sequence KKGGGSTSNGRDSQAKRLGAKA.

Belongs to the bacterial ribosomal protein bL27 family. The N-terminus is cleaved by ribosomal processing cysteine protease Prp.

This Lactococcus lactis subsp. lactis (strain IL1403) (Streptococcus lactis) protein is Large ribosomal subunit protein bL27.